The primary structure comprises 720 residues: Hexanoyl-CoA synthase (720 aa).

The chain crosses the membrane as a helical span at residues 242–262; that stretch reads VDAVVIYLAIVLAGYVVVSIA. 290–293 provides a ligand contact to CoA; it reads RGKK. Residues 477–479, 499–504, glutamate 585, and arginine 607 each bind ATP; these read GEA and EMCGGT. CoA is bound at residue glycine 615. Position 618 (lysine 618) interacts with ATP. Glutamine 681 contacts CoA.

It belongs to the ATP-dependent AMP-binding enzyme family. Mg(2+) is required as a cofactor. In terms of tissue distribution, accumulates in glandular trichomes, especially in female flowers. Present at low levels in roots, stems and leaves.

It localises to the cytoplasm. The protein resides in the cytosol. It is found in the membrane. The enzyme catalyses hexanoate + ATP + CoA = hexanoyl-CoA + AMP + diphosphate. It participates in secondary metabolite biosynthesis; terpenoid biosynthesis. With respect to regulation, inhibitied by high CoA concentrations. Functionally, involved in the biosynthesis of cannabinoids-related terpenophenolic natural products, which have pharmacological activity. Acyl-activating enzyme that catalyzes the conversion of hexanoic acid to hexanoyl-CoA, precursor of the cannabinoid pathway. Can also activate other fatty acids including heptanoate, octanoate and nonanoate. In Cannabis sativa (Hemp), this protein is Hexanoyl-CoA synthase.